We begin with the raw amino-acid sequence, 695 residues long: Adhesion G protein-coupled receptor F4 (695 aa).

The signal sequence occupies residues 1–21; sequence MKMKSQATMICCLVFFLSTEC. The Extracellular portion of the chain corresponds to 22–406; that stretch reads SHYRSKIHLK…TDKVLDYITC (385 aa). 12 N-linked (GlcNAc...) asparagine glycosylation sites follow: N61, N169, N177, N209, N229, N250, N257, N263, N264, N286, N309, and N340. The 149-residue stretch at 249-397 folds into the GAIN-B domain; the sequence is HNTSEKSLNF…SILMSSKSMT (149 aa). Cystine bridges form between C349–C376 and C364–C378. Residues 349 to 397 are GPS; the sequence is CVGWHSKKRRWDEKACQMMLDIRNEVKCRCNYTSVVMSFSILMSSKSMT. A glycan (N-linked (GlcNAc...) asparagine) is linked at N379. The helical transmembrane segment at 407–427 threads the bilayer; the sequence is IGLSVSILSLVLCLIIEATVW. Topologically, residues 428 to 440 are cytoplasmic; the sequence is SRVVVTEISYMRH. A helical membrane pass occupies residues 441–461; it reads VCIVNIAVSLLTANVWFIIGS. The Extracellular segment spans residues 462–485; sequence HFNIKAQDYNMCVAVTFFSHFFYL. The chain crosses the membrane as a helical span at residues 486–506; that stretch reads SLFFWMLFKALLIIYGILVIF. At 507–515 the chain is on the cytoplasmic side; that stretch reads RRMMKSRMM. A helical membrane pass occupies residues 516-536; it reads VIGFAIGYGCPLIIAVTTVAI. The Extracellular segment spans residues 537–561; sequence TEPEKGYMRPEACWLNWDNTKALLA. Residues 562 to 582 form a helical membrane-spanning segment; it reads FAIPAFVIVAVNLIVVLVVAV. The Cytoplasmic segment spans residues 583–606; it reads NTQRPSIGSSKSQDVVIIMRISKN. Residues 607-627 traverse the membrane as a helical segment; sequence VAILTPLLGLTWGFGIATLIE. Residues 628–634 lie on the Extracellular side of the membrane; it reads GTSLTFH. A helical transmembrane segment spans residues 635 to 655; that stretch reads IIFALLNAFQGFFILLFGTIM. Topologically, residues 656–695 are cytoplasmic; the sequence is DHKIRDALRMRMSSLKGKSRAAENASLGPTNGSKLMNRQG. The segment at 674–695 is disordered; the sequence is SRAAENASLGPTNGSKLMNRQG. The segment covering 682 to 695 has biased composition (polar residues); it reads LGPTNGSKLMNRQG.

The protein belongs to the G-protein coupled receptor 2 family. Adhesion G-protein coupled receptor (ADGR) subfamily.

It is found in the membrane. Functionally, orphan receptor. The polypeptide is Adhesion G protein-coupled receptor F4 (ADGRF4) (Homo sapiens (Human)).